Here is a 207-residue protein sequence, read N- to C-terminus: Large ribosomal subunit protein uL4 (207 aa).

The interval 50 to 76 (KTKTVSEVSGTTKKPFKQKGTGNARQG) is disordered.

This sequence belongs to the universal ribosomal protein uL4 family. As to quaternary structure, part of the 50S ribosomal subunit.

Functionally, one of the primary rRNA binding proteins, this protein initially binds near the 5'-end of the 23S rRNA. It is important during the early stages of 50S assembly. It makes multiple contacts with different domains of the 23S rRNA in the assembled 50S subunit and ribosome. In terms of biological role, forms part of the polypeptide exit tunnel. In Rickettsia typhi (strain ATCC VR-144 / Wilmington), this protein is Large ribosomal subunit protein uL4.